We begin with the raw amino-acid sequence, 436 residues long: MKPLIALVGRPNVGKSTLFNRILREKAAIVDPTPGVTRDRHIAEGHWQGREFRLMDTGGYAPEDGVISTAMLEQTMMAIQDADIIIFLADVRSGVSYDDLELAKILKRDFSDKPIFLAVNKAESPQLAIEAASFVSTGFTEPWAISARDGSGVADLLDEILLTFPESDGPPEEDGAIRLAVIGRPNVGKSSFVNALLGSNRQIVSSIPGTTRDAIDTRFTRKQQEFMLIDTAGLRKRTKISAGIEYYSSLRSERAIERCEVAIVMLDATPGIEKQDLKIINIAAERKRGVLLLVNKWDLVEKDSKTSKQYEESLRSHMGNLSYIPVIFTSALTKKNLYRAIDTAKEISQNRSRKISTSALNRFLEEALAANHPSTRTGKELKIKYMTQIEAPWPVFAFFCNNPELVQTNFRKFLENKLREKFSLEGVTISLRFMQK.

2 consecutive EngA-type G domains span residues Pro3 to Asp168 and Ile177 to Ser352. Residues Gly9–Ser16, Asp56–Tyr60, Asn120–Glu123, Gly183–Ser190, Asp230–Leu234, and Asn295–Asp298 contribute to the GTP site. Residues Arg353–Lys436 form the KH-like domain.

The protein belongs to the TRAFAC class TrmE-Era-EngA-EngB-Septin-like GTPase superfamily. EngA (Der) GTPase family. Associates with the 50S ribosomal subunit.

Functionally, GTPase that plays an essential role in the late steps of ribosome biogenesis. In Chlorobium luteolum (strain DSM 273 / BCRC 81028 / 2530) (Pelodictyon luteolum), this protein is GTPase Der.